Reading from the N-terminus, the 248-residue chain is tRNA (guanine-N(1)-)-methyltransferase (248 aa).

S-adenosyl-L-methionine contacts are provided by residues glycine 126 and 150 to 155 (LGDYVL). The tract at residues 224 to 248 (WRRTQQEERTRERRPDLWAAFDSED) is disordered. Positions 227-239 (TQQEERTRERRPD) are enriched in basic and acidic residues.

Belongs to the RNA methyltransferase TrmD family. As to quaternary structure, homodimer.

It localises to the cytoplasm. It carries out the reaction guanosine(37) in tRNA + S-adenosyl-L-methionine = N(1)-methylguanosine(37) in tRNA + S-adenosyl-L-homocysteine + H(+). In terms of biological role, specifically methylates guanosine-37 in various tRNAs. The sequence is that of tRNA (guanine-N(1)-)-methyltransferase from Micrococcus luteus (strain ATCC 4698 / DSM 20030 / JCM 1464 / CCM 169 / CCUG 5858 / IAM 1056 / NBRC 3333 / NCIMB 9278 / NCTC 2665 / VKM Ac-2230) (Micrococcus lysodeikticus).